A 339-amino-acid chain; its full sequence is WAT1-related protein At5g40210 (339 aa).

10 helical membrane passes run 11 to 31 (GWILTAMVVTEFSNVGVNTLV), 42 to 62 (FVVLVYSYTFGSLLLLPLTFF), 74 to 94 (FSILCNMGILGLIASAFQILG), 104 to 124 (TLSSAMSNVNPAFTFILAVVF), 140 to 160 (VLGTILSIIGALVVTLYHGPM), 168 to 188 (WIIGGGLLALQYILVSVSYLV), 200 to 220 (VVVTLVHNVCIAVVCAFVSLL), 233 to 253 (FDITLITVVATGILNSGYYVI), 266 to 286 (LSMFKPLSILIAAVSTFIFLG), and 289 to 309 (LYLGSVMGGILISIGFYMVLW). One can recognise an EamA domain in the interval 29-154 (TLVKAATSKG…LSIIGALVVT (126 aa)).

It belongs to the drug/metabolite transporter (DMT) superfamily. Plant drug/metabolite exporter (P-DME) (TC 2.A.7.4) family.

Its subcellular location is the membrane. The chain is WAT1-related protein At5g40210 from Arabidopsis thaliana (Mouse-ear cress).